A 405-amino-acid chain; its full sequence is Chorismate synthase (405 aa).

Positions 43 and 49 each coordinate NADP(+). FMN is bound by residues 138–140 (RAS) and 259–260 (QA). Residues 275-286 (RRGSQAHDEMRP) show a composition bias toward basic and acidic residues. The interval 275-308 (RRGSQAHDEMRPGPDGVLRSTNRAGGLEGGMTNG) is disordered. FMN is bound by residues Gly-303, 318-322 (KPIST), and Arg-344.

The protein belongs to the chorismate synthase family. Homotetramer. Requires FMNH2 as cofactor.

The enzyme catalyses 5-O-(1-carboxyvinyl)-3-phosphoshikimate = chorismate + phosphate. Its pathway is metabolic intermediate biosynthesis; chorismate biosynthesis; chorismate from D-erythrose 4-phosphate and phosphoenolpyruvate: step 7/7. Its function is as follows. Catalyzes the anti-1,4-elimination of the C-3 phosphate and the C-6 proR hydrogen from 5-enolpyruvylshikimate-3-phosphate (EPSP) to yield chorismate, which is the branch point compound that serves as the starting substrate for the three terminal pathways of aromatic amino acid biosynthesis. This reaction introduces a second double bond into the aromatic ring system. This Nocardia farcinica (strain IFM 10152) protein is Chorismate synthase.